A 453-amino-acid polypeptide reads, in one-letter code: UDP-N-acetylmuramoylalanine--D-glutamate ligase (453 aa).

117–123 (GSNGKST) contributes to the ATP binding site.

It belongs to the MurCDEF family.

The protein localises to the cytoplasm. It carries out the reaction UDP-N-acetyl-alpha-D-muramoyl-L-alanine + D-glutamate + ATP = UDP-N-acetyl-alpha-D-muramoyl-L-alanyl-D-glutamate + ADP + phosphate + H(+). It participates in cell wall biogenesis; peptidoglycan biosynthesis. Functionally, cell wall formation. Catalyzes the addition of glutamate to the nucleotide precursor UDP-N-acetylmuramoyl-L-alanine (UMA). The chain is UDP-N-acetylmuramoylalanine--D-glutamate ligase from Chromobacterium violaceum (strain ATCC 12472 / DSM 30191 / JCM 1249 / CCUG 213 / NBRC 12614 / NCIMB 9131 / NCTC 9757 / MK).